The chain runs to 175 residues: Protein GrpE (175 aa).

Residues Met-1 to Gln-35 are disordered. The span at Asp-25–Gln-35 shows a compositional bias: basic and acidic residues.

Belongs to the GrpE family. Homodimer.

The protein localises to the cytoplasm. Functionally, participates actively in the response to hyperosmotic and heat shock by preventing the aggregation of stress-denatured proteins, in association with DnaK and GrpE. It is the nucleotide exchange factor for DnaK and may function as a thermosensor. Unfolded proteins bind initially to DnaJ; upon interaction with the DnaJ-bound protein, DnaK hydrolyzes its bound ATP, resulting in the formation of a stable complex. GrpE releases ADP from DnaK; ATP binding to DnaK triggers the release of the substrate protein, thus completing the reaction cycle. Several rounds of ATP-dependent interactions between DnaJ, DnaK and GrpE are required for fully efficient folding. The polypeptide is Protein GrpE (Campylobacter jejuni (strain RM1221)).